The sequence spans 272 residues: Inositol monophosphatase (272 aa).

Mg(2+) contacts are provided by Glu-71, Asp-90, Ile-92, and Asp-93. Substrate is bound at residue Glu-71. Substrate contacts are provided by residues 92-95, 194-196, Glu-213, and Asp-220; these read IDGT and GTA. Residue Asp-220 participates in Mg(2+) binding.

It belongs to the inositol monophosphatase superfamily. Mg(2+) serves as cofactor.

The protein localises to the cytoplasm. The catalysed reaction is a myo-inositol phosphate + H2O = myo-inositol + phosphate. It carries out the reaction alpha-D-galactose 1-phosphate + H2O = D-galactose + phosphate. It participates in polyol metabolism; myo-inositol biosynthesis; myo-inositol from D-glucose 6-phosphate: step 2/2. Inhibited by Li(+), Ca(2+) and Mn(2+), but also by Mg(2+) at concentrations above 3 mM. Functionally, responsible for the provision of inositol required for synthesis of phosphatidylinositol and polyphosphoinositides. Has broad substrate specificity and can use myo-inositol monophosphates, myo-inositol 1,3-diphosphate, myo-inositol 1,4-diphosphate, scyllo-inositol-phosphate, D-galactose 1-phosphate, glucose-1-phosphate, glucose-6-phosphate, fructose-1-phosphate, beta-glycerophosphate, and 2'-AMP as substrates. The chain is Inositol monophosphatase (impa1) from Dictyostelium discoideum (Social amoeba).